The sequence spans 472 residues: MLPCFTRKPVDHPLGFLVALSGLLMQLMSYGIDNSYSIFSDDMHKDPSLGYPSVTTISLGNSVSLGLSPAFGVLCGFLVDRVPPRLMMAVSTLMLFAGLWLSSTFAHNVTAVTFSYCLLASISSACMLSPGAAATSSWFNRYQGLAMGINFSGGGVGSAIIPSLAGKWVVAYGWRKTFRLMSAFCAIGVVATLLSARRAPPKKEEAGPSEYDEGQERQEQGEEEQAHTDEENRNNNNSNGETTPARRGLHTHKLNPWELFLTMFSRAFLGNFFCWLIFSWAFYSLIYVAVPYVSSMGKAGTVYADISPIPTDIASTLFTFYGVFQIVGSILVGWLATGTTNEFAYVLCATIGGIFCAFLGFCRSYVAFALLLCVIGFCMAGMFAVMPALIAERLYGPNLGFYMGAVFLAGVVGGFSAPPIQAELQQRHYGNYTYVCVFMSACMTLAAAVCYITMWRDKRVRIVSAAAEAKLA.

Residues 1–11 (MLPCFTRKPVD) are Cytoplasmic-facing. The chain crosses the membrane as a helical span at residues 12–32 (HPLGFLVALSGLLMQLMSYGI). The Extracellular segment spans residues 33-58 (DNSYSIFSDDMHKDPSLGYPSVTTIS). Residues 59–79 (LGNSVSLGLSPAFGVLCGFLV) form a helical membrane-spanning segment. Residues 80–85 (DRVPPR) are Cytoplasmic-facing. A helical transmembrane segment spans residues 86 to 106 (LMMAVSTLMLFAGLWLSSTFA). At 107–108 (HN) the chain is on the extracellular side. Asn-108 is a glycosylation site (N-linked (GlcNAc...) asparagine). The helical transmembrane segment at 109-129 (VTAVTFSYCLLASISSACMLS) threads the bilayer. Over 130–144 (PGAAATSSWFNRYQG) the chain is Cytoplasmic. The chain crosses the membrane as a helical span at residues 145-165 (LAMGINFSGGGVGSAIIPSLA). Residues 166-179 (GKWVVAYGWRKTFR) lie on the Extracellular side of the membrane. Residues 180-196 (LMSAFCAIGVVATLLSA) form a helical membrane-spanning segment. Over 197 to 271 (RRAPPKKEEA…TMFSRAFLGN (75 aa)) the chain is Cytoplasmic. The disordered stretch occupies residues 200 to 248 (PPKKEEAGPSEYDEGQERQEQGEEEQAHTDEENRNNNNSNGETTPARRG). Over residues 214 to 233 (GQERQEQGEEEQAHTDEENR) the composition is skewed to basic and acidic residues. The chain crosses the membrane as a helical span at residues 272 to 292 (FFCWLIFSWAFYSLIYVAVPY). Over 293–315 (VSSMGKAGTVYADISPIPTDIAS) the chain is Extracellular. The chain crosses the membrane as a helical span at residues 316 to 336 (TLFTFYGVFQIVGSILVGWLA). The Cytoplasmic portion of the chain corresponds to 337–341 (TGTTN). The helical transmembrane segment at 342 to 362 (EFAYVLCATIGGIFCAFLGFC) threads the bilayer. At 363–365 (RSY) the chain is on the extracellular side. A helical membrane pass occupies residues 366–386 (VAFALLLCVIGFCMAGMFAVM). Residues 387–399 (PALIAERLYGPNL) are Cytoplasmic-facing. The helical transmembrane segment at 400–420 (GFYMGAVFLAGVVGGFSAPPI) threads the bilayer. Topologically, residues 421 to 434 (QAELQQRHYGNYTY) are extracellular. Residue Asn-431 is glycosylated (N-linked (GlcNAc...) asparagine). Residues 435–455 (VCVFMSACMTLAAAVCYITMW) form a helical membrane-spanning segment. The Cytoplasmic segment spans residues 456 to 472 (RDKRVRIVSAAAEAKLA).

It belongs to the major facilitator superfamily. RibJ family.

The protein localises to the cell membrane. In terms of biological role, transporter involved in riboflavin (vitamin B2) uptake. Also transports FMN and FAD. The protein is Riboflavin transporter RibJ of Trypanosoma cruzi (strain CL Brener).